Reading from the N-terminus, the 499-residue chain is Cobyric acid synthase (499 aa).

Residues 246 to 441 (PIDIAIIKLP…IHGIFDGAEL (196 aa)) enclose the GATase cobBQ-type domain. Catalysis depends on Cys-327, which acts as the Nucleophile. The active site involves His-433.

Belongs to the CobB/CobQ family. CobQ subfamily.

It participates in cofactor biosynthesis; adenosylcobalamin biosynthesis. Its function is as follows. Catalyzes amidations at positions B, D, E, and G on adenosylcobyrinic A,C-diamide. NH(2) groups are provided by glutamine, and one molecule of ATP is hydrogenolyzed for each amidation. The sequence is that of Cobyric acid synthase from Clostridium kluyveri (strain NBRC 12016).